The chain runs to 480 residues: Type VI lipase adapter protein Tla3 (480 aa).

The interval 410 to 458 (ISSPTPGKKPVHDPFGVDLLPQTASGDGPPPSADPVAPASRLTTRLPPG) is disordered.

In terms of assembly, interacts with the Tle3 toxin on one side and with the H2-T6SS component VgrG2b on the other side.

It localises to the cytoplasm. Functionally, adapter protein that targets and loads the Tle3 toxin onto the H2 type VI secretion system (H2-T6SS) machinery through an interaction with the TTR domain of VgrG2b. Seems specific for Tle3. This is Type VI lipase adapter protein Tla3 from Pseudomonas aeruginosa (strain ATCC 15692 / DSM 22644 / CIP 104116 / JCM 14847 / LMG 12228 / 1C / PRS 101 / PAO1).